We begin with the raw amino-acid sequence, 620 residues long: Kelch-like protein 8 (620 aa).

A compositionally biased stretch (polar residues) spans 1–10; sequence MASDSMSSKQ. Residues 1-35 are disordered; that stretch reads MASDSMSSKQARNHITKGKRQQQHQQIKNRSSISD. Ala-2 carries the N-acetylalanine modification. Over residues 11–22 the composition is skewed to basic residues; the sequence is ARNHITKGKRQQ. Residues 23 to 34 are compositionally biased toward polar residues; that stretch reads QHQQIKNRSSIS. One can recognise a BTB domain in the interval 67–134; the sequence is CDVTLKVGSK…VYSSRLTLTV (68 aa). Residues 169-270 form the BACK domain; sequence CLAVRAFAES…LPVDFLMGVV (102 aa). 6 Kelch repeats span residues 319 to 366, 367 to 413, 415 to 460, 462 to 507, 508 to 554, and 556 to 601; these read VLFC…SVEG, KVYA…SLGG, IYAI…ALVN, VYAV…KLHG, CLYV…TVMG, and IFAV…VCSC.

In terms of assembly, component of the BCR(KLHL8) E3 ubiquitin ligase complex, at least composed of CUL3, KLHL8 and RBX1. Interacts with RAPSN.

The protein operates within protein modification; protein ubiquitination. Substrate-specific adapter of a BCR (BTB-CUL3-RBX1) E3 ubiquitin ligase complex required for The BCR(KLHL8) ubiquitin ligase complex mediates ubiquitination and degradation of RAPSN. The polypeptide is Kelch-like protein 8 (KLHL8) (Homo sapiens (Human)).